Here is a 130-residue protein sequence, read N- to C-terminus: Sec-independent protein translocase protein TatB (130 aa).

Residues 1–21 (MFDIGFWELVLIFVVGLVVLG) form a helical membrane-spanning segment. The tract at residues 85-130 (LKQAAQSVNRPYADVSAKNEATSSSSSDATHQTEATKTSAANTKSE) is disordered. A compositionally biased stretch (polar residues) spans 112–130 (DATHQTEATKTSAANTKSE).

It belongs to the TatB family. The Tat system comprises two distinct complexes: a TatABC complex, containing multiple copies of TatA, TatB and TatC subunits, and a separate TatA complex, containing only TatA subunits. Substrates initially bind to the TatABC complex, which probably triggers association of the separate TatA complex to form the active translocon.

It localises to the cell inner membrane. Part of the twin-arginine translocation (Tat) system that transports large folded proteins containing a characteristic twin-arginine motif in their signal peptide across membranes. Together with TatC, TatB is part of a receptor directly interacting with Tat signal peptides. TatB may form an oligomeric binding site that transiently accommodates folded Tat precursor proteins before their translocation. The chain is Sec-independent protein translocase protein TatB from Vibrio vulnificus (strain CMCP6).